Consider the following 161-residue polypeptide: Ecotin (161 aa).

A signal peptide spans 1-23; the sequence is MGNFTVRATAGLMLASLSTLAHA. C69 and C106 form a disulfide bridge.

It belongs to the protease inhibitor I11 (ecotin) family. In terms of assembly, homodimer.

It localises to the periplasm. General inhibitor of family S1 serine proteases. The chain is Ecotin from Pseudomonas fluorescens (strain Pf0-1).